A 274-amino-acid polypeptide reads, in one-letter code: tRNA (mnm(5)s(2)U34)-methyltransferase, chloroplastic (274 aa).

A chloroplast-targeting transit peptide spans M1–C50. Residues N108, N110, D134, Q136, and H166 each contribute to the S-adenosyl-L-methionine site.

The protein belongs to the methyltransferase superfamily. MnmM family.

It localises to the plastid. Its subcellular location is the chloroplast. It catalyses the reaction 5-aminomethyl-2-thiouridine(34) in tRNA + S-adenosyl-L-methionine = 5-methylaminomethyl-2-thiouridine(34) in tRNA + S-adenosyl-L-homocysteine + H(+). It participates in tRNA modification. Functionally, involved in the biosynthesis of 5-methylaminomethyl-2-thiouridine (mnm(5)s(2)U) at the wobble position (U34) in tRNA. Catalyzes the transfer of a methyl group from S-adenosyl-L-methionine to nm(5)s(2)U34 to form mnm(5)s(2)U34. This Arabidopsis thaliana (Mouse-ear cress) protein is tRNA (mnm(5)s(2)U34)-methyltransferase, chloroplastic.